Reading from the N-terminus, the 620-residue chain is Chaperone protein HscA homolog (620 aa).

It belongs to the heat shock protein 70 family.

Functionally, chaperone involved in the maturation of iron-sulfur cluster-containing proteins. Has a low intrinsic ATPase activity which is markedly stimulated by HscB. This Herminiimonas arsenicoxydans protein is Chaperone protein HscA homolog.